A 445-amino-acid chain; its full sequence is 3-phosphoshikimate 1-carboxyvinyltransferase (445 aa).

3 residues coordinate 3-phosphoshikimate: K21, S22, and R26. K21 contacts phosphoenolpyruvate. Positions 92 and 120 each coordinate phosphoenolpyruvate. 3-phosphoshikimate contacts are provided by S165, Q166, D307, and K334. Position 166 (Q166) interacts with phosphoenolpyruvate. Residue D307 is the Proton acceptor of the active site. Residues R338, R379, and K405 each contribute to the phosphoenolpyruvate site.

This sequence belongs to the EPSP synthase family. Monomer.

It localises to the cytoplasm. The catalysed reaction is 3-phosphoshikimate + phosphoenolpyruvate = 5-O-(1-carboxyvinyl)-3-phosphoshikimate + phosphate. Its pathway is metabolic intermediate biosynthesis; chorismate biosynthesis; chorismate from D-erythrose 4-phosphate and phosphoenolpyruvate: step 6/7. Its function is as follows. Catalyzes the transfer of the enolpyruvyl moiety of phosphoenolpyruvate (PEP) to the 5-hydroxyl of shikimate-3-phosphate (S3P) to produce enolpyruvyl shikimate-3-phosphate and inorganic phosphate. This is 3-phosphoshikimate 1-carboxyvinyltransferase from Chlamydia abortus (strain DSM 27085 / S26/3) (Chlamydophila abortus).